A 541-amino-acid chain; its full sequence is Calcium-dependent protein kinase 9 (541 aa).

Positions 1–75 (MGNCFAKNHG…PGLSPKTTTK (75 aa)) are disordered. A lipid anchor (N-myristoyl glycine) is attached at G2. Residues 14–54 (PQQNGNTTRSVEVGVTNQDPPSYTPQARTTQQPEKPGSVNS) show a composition bias toward polar residues. Position 69 is a phosphoserine (S69). Residues 91–349 (YTLGKELGRG…AADVLQHPWL (259 aa)) form the Protein kinase domain. Residues 97–105 (LGRGQFGVT) and K120 contribute to the ATP site. The Proton acceptor role is filled by D215. S255 carries the post-translational modification Phosphoserine. The tract at residues 355–385 (ASDKPIDSAVLSRMKQFRAMNKLKKLALKVI) is autoinhibitory domain. EF-hand domains are found at residues 392–427 (EEIQGLKAMFANIDTDNSGTITYEELKEGLAKLGSK), 428–463 (LTEAEVKQLMDAADVDGNGSIDYIEFITATMHRHRL), 464–499 (ESNENLYKAFQHFDKDSSGYITIDELESALKEYGMG), and 500–534 (DDATIKEVLSDVDSDNDGRINYEEFCAMMRSGNPQ). 20 residues coordinate Ca(2+): D405, D407, S409, T411, E416, D441, D443, N445, S447, E452, D477, D479, S481, Y483, E488, D512, D514, D516, R518, and E523.

Belongs to the protein kinase superfamily. Ser/Thr protein kinase family. CDPK subfamily.

It is found in the cell membrane. The enzyme catalyses L-seryl-[protein] + ATP = O-phospho-L-seryl-[protein] + ADP + H(+). It catalyses the reaction L-threonyl-[protein] + ATP = O-phospho-L-threonyl-[protein] + ADP + H(+). Activated by calcium. Autophosphorylation may play an important role in the regulation of the kinase activity. Functionally, may play a role in signal transduction pathways that involve calcium as a second messenger. The polypeptide is Calcium-dependent protein kinase 9 (CPK9) (Arabidopsis thaliana (Mouse-ear cress)).